Reading from the N-terminus, the 82-residue chain is Putative defensin-like protein 191 (82 aa).

The signal sequence occupies residues 1 to 28 (MAKSVNATGFITYMVIFLILTGISRVKA). Disulfide bonds link cysteine 33/cysteine 79, cysteine 46/cysteine 65, cysteine 51/cysteine 74, and cysteine 55/cysteine 76.

This sequence belongs to the DEFL family.

It is found in the secreted. The polypeptide is Putative defensin-like protein 191 (Arabidopsis thaliana (Mouse-ear cress)).